The following is an 89-amino-acid chain: Small ribosomal subunit protein uS15 (89 aa).

This sequence belongs to the universal ribosomal protein uS15 family. In terms of assembly, part of the 30S ribosomal subunit. Forms a bridge to the 50S subunit in the 70S ribosome, contacting the 23S rRNA.

Its function is as follows. One of the primary rRNA binding proteins, it binds directly to 16S rRNA where it helps nucleate assembly of the platform of the 30S subunit by binding and bridging several RNA helices of the 16S rRNA. In terms of biological role, forms an intersubunit bridge (bridge B4) with the 23S rRNA of the 50S subunit in the ribosome. The chain is Small ribosomal subunit protein uS15 from Corynebacterium diphtheriae (strain ATCC 700971 / NCTC 13129 / Biotype gravis).